The following is a 99-amino-acid chain: Integration host factor subunit alpha (99 aa).

It belongs to the bacterial histone-like protein family. In terms of assembly, heterodimer of an alpha and a beta chain.

Functionally, this protein is one of the two subunits of integration host factor, a specific DNA-binding protein that functions in genetic recombination as well as in transcriptional and translational control. The protein is Integration host factor subunit alpha of Psychrobacter arcticus (strain DSM 17307 / VKM B-2377 / 273-4).